The sequence spans 1101 residues: Error-prone DNA polymerase (1101 aa).

The interval 1055–1101 (ADLGHPMDSAVGQTTPQTDSAPRPRPQPRAMHPREQAKRLFPSRDFH) is disordered. The span at 1065-1074 (VGQTTPQTDS) shows a compositional bias: polar residues. Basic and acidic residues predominate over residues 1086–1101 (HPREQAKRLFPSRDFH).

The protein belongs to the DNA polymerase type-C family. DnaE2 subfamily.

It is found in the cytoplasm. The enzyme catalyses DNA(n) + a 2'-deoxyribonucleoside 5'-triphosphate = DNA(n+1) + diphosphate. Functionally, DNA polymerase involved in damage-induced mutagenesis and translesion synthesis (TLS). It is not the major replicative DNA polymerase. This chain is Error-prone DNA polymerase, found in Ruegeria pomeroyi (strain ATCC 700808 / DSM 15171 / DSS-3) (Silicibacter pomeroyi).